Reading from the N-terminus, the 410-residue chain is Multifunctional CCA protein (410 aa).

Residues G8 and R11 each coordinate ATP. 2 residues coordinate CTP: G8 and R11. The Mg(2+) site is built by E21 and D23. Positions 91, 137, and 140 each coordinate ATP. The CTP site is built by R91, R137, and R140. One can recognise an HD domain in the interval 228-329 (TLLHQFLCLK…WKLFKSLDIL (102 aa)).

This sequence belongs to the tRNA nucleotidyltransferase/poly(A) polymerase family. Bacterial CCA-adding enzyme type 1 subfamily. Monomer. Can also form homodimers and oligomers. It depends on Mg(2+) as a cofactor. Requires Ni(2+) as cofactor.

The enzyme catalyses a tRNA precursor + 2 CTP + ATP = a tRNA with a 3' CCA end + 3 diphosphate. It catalyses the reaction a tRNA with a 3' CCA end + 2 CTP + ATP = a tRNA with a 3' CCACCA end + 3 diphosphate. In terms of biological role, catalyzes the addition and repair of the essential 3'-terminal CCA sequence in tRNAs without using a nucleic acid template. Adds these three nucleotides in the order of C, C, and A to the tRNA nucleotide-73, using CTP and ATP as substrates and producing inorganic pyrophosphate. tRNA 3'-terminal CCA addition is required both for tRNA processing and repair. Also involved in tRNA surveillance by mediating tandem CCA addition to generate a CCACCA at the 3' terminus of unstable tRNAs. While stable tRNAs receive only 3'-terminal CCA, unstable tRNAs are marked with CCACCA and rapidly degraded. The protein is Multifunctional CCA protein of Alcanivorax borkumensis (strain ATCC 700651 / DSM 11573 / NCIMB 13689 / SK2).